A 1140-amino-acid polypeptide reads, in one-letter code: Receptor-type guanylate cyclase gcy-3 (1140 aa).

An N-terminal signal peptide occupies residues 1–21; sequence MKNVFQLLIPLFFHLFSLVSL. The Extracellular segment spans residues 22–495; that stretch reads QNIPVSTGTT…CPLPFWEQYG (474 aa). N-linked (GlcNAc...) asparagine glycosylation is found at N220, N301, N349, N385, N418, N441, and N459. A helical membrane pass occupies residues 496-516; that stretch reads ILIFVGAGVFLIMITTNLICF. Residues 517-1140 lie on the Cytoplasmic side of the membrane; the sequence is LFMIKNRREE…RQYKMDTLKI (624 aa). The 289-residue stretch at 538 to 826 folds into the Protein kinase domain; it reads FVKLRELERK…NICEQLRDLM (289 aa). ATP is bound by residues 544–552 and K582; that span reads LERKSKGTS. The Guanylate cyclase domain maps to 897 to 1027; the sequence is TVFFSDVVKF…DTVNTASRME (131 aa). The tract at residues 1083 to 1140 is disordered; the sequence is PSISNRSTPPVTQERFTVRAPDTPEARSVSSHGSRPSSNHNNNNDPLYRQYKMDTLKI. Residues 1084–1097 show a composition bias toward polar residues; it reads SISNRSTPPVTQER. The span at 1109–1126 shows a compositional bias: low complexity; sequence RSVSSHGSRPSSNHNNNN.

The protein belongs to the adenylyl cyclase class-4/guanylyl cyclase family. In terms of tissue distribution, expressed asymmetrically in ASE right (ASER) sensory neuron and bilaterally in ASI sensory neurons. Expressed in PVT interneuron.

It localises to the cell membrane. The catalysed reaction is GTP = 3',5'-cyclic GMP + diphosphate. Guanylate cyclase involved in the production of the second messenger cGMP. The sequence is that of Receptor-type guanylate cyclase gcy-3 from Caenorhabditis elegans.